The sequence spans 225 residues: Suppressor of cytokine signaling 3 (225 aa).

Positions 22-33 (LKTFSSKSEYQL) are kinase inhibitory region (KIR). An extended SH2 subdomain (ESS) region spans residues 34–45 (VVNAVRKLQESG). Residues 46 to 142 (FYWSAVTGGE…APSFPSPPTE (97 aa)) enclose the SH2 domain. A compositionally biased stretch (pro residues) spans 131-142 (PGAPSFPSPPTE). The disordered stretch occupies residues 131–162 (PGAPSFPSPPTEPSSEVPEQPSAQPLPGSPPR). The segment covering 143-155 (PSSEVPEQPSAQP) has biased composition (low complexity). The SOCS box domain maps to 177 to 224 (VLSRPLSSNVATLQHLCRKTVNGHLDSYEKVTQLPGPIREFLDQYDAP).

In terms of assembly, interacts with multiple activated proteins of the tyrosine kinase signaling pathway including IGF1 receptor, insulin receptor and JAK2. Binding to JAK2 is mediated through the KIR and SH2 domains to a phosphorylated tyrosine residue within the JAK2 JH1 domain. Binds specific activated tyrosine residues of the leptin, EPO, IL12, GSCF and gp130 receptors. Interaction with CSNK1E stabilizes SOCS3 protein. Component of the probable ECS(SOCS3) E3 ubiquitin-protein ligase complex which contains CUL5, RNF7/RBX2, Elongin BC complex and SOCS3. Interacts with CUL5, RNF7, ELOB and ELOC. Interacts with CUL2. Interacts with FGFR3. Interacts with INSR. Interacts with BCL10; this interaction may interfere with BCL10-binding with PELI2. Interacts with NOD2 (via CARD domain); the interaction promotes NOD2 degradation. In terms of processing, phosphorylated on tyrosine residues after stimulation by the cytokines, IL-2, EPO or IGF1. In terms of tissue distribution, widely expressed with high expression in heart, placenta, skeletal muscle, peripheral blood leukocytes, fetal and adult lung, and fetal liver and kidney. Lower levels in thymus.

The protein operates within protein modification; protein ubiquitination. Functionally, SOCS family proteins form part of a classical negative feedback system that regulates cytokine signal transduction. SOCS3 is involved in negative regulation of cytokines that signal through the JAK/STAT pathway. Inhibits cytokine signal transduction by binding to tyrosine kinase receptors including IL6ST/gp130, LIF, erythropoietin, insulin, IL12, GCSF and leptin receptors. Binding to JAK2 inhibits its kinase activity and regulates IL6 signaling. Suppresses fetal liver erythropoiesis. Regulates onset and maintenance of allergic responses mediated by T-helper type 2 cells. Probable substrate recognition component of a SCF-like ECS (Elongin BC-CUL2/5-SOCS-box protein) E3 ubiquitin-protein ligase complex which mediates the ubiquitination and subsequent proteasomal degradation of target proteins. The chain is Suppressor of cytokine signaling 3 from Homo sapiens (Human).